Here is a 380-residue protein sequence, read N- to C-terminus: Large ribosomal subunit protein mL38 (380 aa).

Residues 1 to 26 (MAAPWWRVVLNGSRNWRGFSTSAALS) constitute a mitochondrion transit peptide. The stretch at 101-122 (QQLLERKRVLRELRTSVEEERA) forms a coiled coil.

This sequence belongs to the phosphatidylethanolamine-binding protein family. Mitochondrion-specific ribosomal protein mL38 subfamily. Component of the mitochondrial ribosome large subunit (39S) which comprises a 16S rRNA and about 50 distinct proteins.

The protein resides in the mitochondrion. This chain is Large ribosomal subunit protein mL38 (MRPL38), found in Bos taurus (Bovine).